The primary structure comprises 384 residues: Geranylgeranyl pyrophosphate synthase (384 aa).

Disordered regions lie at residues 1–25 (MVPN…TSST) and 39–78 (RPVP…PARY). The span at 47-62 (LGQNNTRNRSSSTTAI) shows a compositional bias: polar residues. Isopentenyl diphosphate contacts are provided by K112, R115, and H144. Mg(2+) contacts are provided by D151 and D155. R160 is a dimethylallyl diphosphate binding site. Residue R161 coordinates isopentenyl diphosphate. Dimethylallyl diphosphate-binding residues include K238, T239, and Q272. Position 275 (D275) interacts with Mg(2+). 3 residues coordinate dimethylallyl diphosphate: N279, K289, and K299.

This sequence belongs to the FPP/GGPP synthase family. Mg(2+) is required as a cofactor.

It carries out the reaction isopentenyl diphosphate + dimethylallyl diphosphate = (2E)-geranyl diphosphate + diphosphate. It catalyses the reaction isopentenyl diphosphate + (2E)-geranyl diphosphate = (2E,6E)-farnesyl diphosphate + diphosphate. The catalysed reaction is isopentenyl diphosphate + (2E,6E)-farnesyl diphosphate = (2E,6E,10E)-geranylgeranyl diphosphate + diphosphate. It participates in secondary metabolite biosynthesis. Its function is as follows. Catalyzes the trans-addition of the 3 molecules of isopentenyl diphosphate (IPP) onto dimethylallyl diphosphate (DMAPP) to form geranylgeranyl pyrophosphate (GGPP). GGPP is a precursor for the biosynthesis of many secondary metabolites, including the indole diterpenes nodulisporic acids (NA). This chain is Geranylgeranyl pyrophosphate synthase, found in Hypoxylon pulicicidum.